An 81-amino-acid polypeptide reads, in one-letter code: Photosystem I iron-sulfur center (81 aa).

4Fe-4S ferredoxin-type domains lie at 2–31 (AHSV…MVPW) and 39–68 (IASA…VRVY). Cysteine 11, cysteine 14, cysteine 17, cysteine 21, cysteine 48, cysteine 51, cysteine 54, and cysteine 58 together coordinate [4Fe-4S] cluster.

In terms of assembly, the eukaryotic PSI reaction center is composed of at least 11 subunits. [4Fe-4S] cluster is required as a cofactor.

It localises to the plastid. Its subcellular location is the chloroplast thylakoid membrane. It carries out the reaction reduced [plastocyanin] + hnu + oxidized [2Fe-2S]-[ferredoxin] = oxidized [plastocyanin] + reduced [2Fe-2S]-[ferredoxin]. Apoprotein for the two 4Fe-4S centers FA and FB of photosystem I (PSI); essential for photochemical activity. FB is the terminal electron acceptor of PSI, donating electrons to ferredoxin. The C-terminus interacts with PsaA/B/D and helps assemble the protein into the PSI complex. Required for binding of PsaD and PsaE to PSI. PSI is a plastocyanin/cytochrome c6-ferredoxin oxidoreductase, converting photonic excitation into a charge separation, which transfers an electron from the donor P700 chlorophyll pair to the spectroscopically characterized acceptors A0, A1, FX, FA and FB in turn. The protein is Photosystem I iron-sulfur center of Pyropia yezoensis (Susabi-nori).